Reading from the N-terminus, the 197-residue chain is Imidazoleglycerol-phosphate dehydratase (197 aa).

The protein belongs to the imidazoleglycerol-phosphate dehydratase family.

It localises to the cytoplasm. The enzyme catalyses D-erythro-1-(imidazol-4-yl)glycerol 3-phosphate = 3-(imidazol-4-yl)-2-oxopropyl phosphate + H2O. It functions in the pathway amino-acid biosynthesis; L-histidine biosynthesis; L-histidine from 5-phospho-alpha-D-ribose 1-diphosphate: step 6/9. The chain is Imidazoleglycerol-phosphate dehydratase from Methylocella silvestris (strain DSM 15510 / CIP 108128 / LMG 27833 / NCIMB 13906 / BL2).